The sequence spans 510 residues: 2,3-bisphosphoglycerate-independent phosphoglycerate mutase (510 aa).

Mn(2+) contacts are provided by Asp-13 and Ser-63. Ser-63 acts as the Phosphoserine intermediate in catalysis. Residues His-124, 154-155 (RD), Arg-186, Arg-192, 262-265 (RADR), and Lys-334 contribute to the substrate site. Mn(2+) is bound by residues Asp-401, His-405, Asp-442, His-443, and His-461.

This sequence belongs to the BPG-independent phosphoglycerate mutase family. In terms of assembly, monomer. Requires Mn(2+) as cofactor.

It carries out the reaction (2R)-2-phosphoglycerate = (2R)-3-phosphoglycerate. Its pathway is carbohydrate degradation; glycolysis; pyruvate from D-glyceraldehyde 3-phosphate: step 3/5. Functionally, catalyzes the interconversion of 2-phosphoglycerate and 3-phosphoglycerate. The sequence is that of 2,3-bisphosphoglycerate-independent phosphoglycerate mutase from Aliivibrio fischeri (strain ATCC 700601 / ES114) (Vibrio fischeri).